We begin with the raw amino-acid sequence, 101 residues long: Small ribosomal subunit protein uS14 (101 aa).

This sequence belongs to the universal ribosomal protein uS14 family. Part of the 30S ribosomal subunit. Contacts proteins S3 and S10.

Functionally, binds 16S rRNA, required for the assembly of 30S particles and may also be responsible for determining the conformation of the 16S rRNA at the A site. The sequence is that of Small ribosomal subunit protein uS14 from Brucella anthropi (strain ATCC 49188 / DSM 6882 / CCUG 24695 / JCM 21032 / LMG 3331 / NBRC 15819 / NCTC 12168 / Alc 37) (Ochrobactrum anthropi).